A 277-amino-acid chain; its full sequence is Ribonuclease HII (277 aa).

Residues 20-250 (KLIIGLDEAG…SKKLLKKIED (231 aa)) form the RNase H type-2 domain. Residues D26, E27, and D141 each contribute to the a divalent metal cation site.

This sequence belongs to the RNase HII family. Mn(2+) serves as cofactor. Mg(2+) is required as a cofactor.

The protein localises to the cytoplasm. The catalysed reaction is Endonucleolytic cleavage to 5'-phosphomonoester.. Endonuclease that specifically degrades the RNA of RNA-DNA hybrids. The protein is Ribonuclease HII of Methanococcus aeolicus (strain ATCC BAA-1280 / DSM 17508 / OCM 812 / Nankai-3).